The chain runs to 325 residues: Eukaryotic translation initiation factor 3 subunit I (325 aa).

5 WD repeats span residues 8-47 (GHER…RLGT), 50-89 (GHTG…QLAL), 144-183 (CSDS…QLSN), 186-225 (EHTK…HLKT), and 283-324 (GHFG…FEFE).

This sequence belongs to the eIF-3 subunit I family. In terms of assembly, component of the eukaryotic translation initiation factor 3 (eIF-3) complex, which is composed of 13 subunits: EIF3A, EIF3B, EIF3C, EIF3D, EIF3E, EIF3F, EIF3G, EIF3H, EIF3I, EIF3J, EIF3K, EIF3L and EIF3M.

It localises to the cytoplasm. Its function is as follows. Component of the eukaryotic translation initiation factor 3 (eIF-3) complex, which is involved in protein synthesis of a specialized repertoire of mRNAs and, together with other initiation factors, stimulates binding of mRNA and methionyl-tRNAi to the 40S ribosome. The eIF-3 complex specifically targets and initiates translation of a subset of mRNAs involved in cell proliferation. This is Eukaryotic translation initiation factor 3 subunit I from Taeniopygia guttata (Zebra finch).